The sequence spans 216 residues: Pyridoxine/pyridoxamine 5'-phosphate oxidase (216 aa).

Residues 63 to 68 (RMVLMK), 78 to 79 (YS), Lys-85, and Gln-107 each bind FMN. Residue Lys-68 coordinates substrate. Substrate contacts are provided by Tyr-125 and Arg-129. FMN contacts are provided by residues 142-143 (QS) and Trp-187. 193–195 (RLH) is a substrate binding site. An FMN-binding site is contributed by Arg-197.

It belongs to the pyridoxamine 5'-phosphate oxidase family. In terms of assembly, homodimer. The cofactor is FMN.

It catalyses the reaction pyridoxamine 5'-phosphate + O2 + H2O = pyridoxal 5'-phosphate + H2O2 + NH4(+). The enzyme catalyses pyridoxine 5'-phosphate + O2 = pyridoxal 5'-phosphate + H2O2. Its pathway is cofactor metabolism; pyridoxal 5'-phosphate salvage; pyridoxal 5'-phosphate from pyridoxamine 5'-phosphate: step 1/1. It functions in the pathway cofactor metabolism; pyridoxal 5'-phosphate salvage; pyridoxal 5'-phosphate from pyridoxine 5'-phosphate: step 1/1. Functionally, catalyzes the oxidation of either pyridoxine 5'-phosphate (PNP) or pyridoxamine 5'-phosphate (PMP) into pyridoxal 5'-phosphate (PLP). This chain is Pyridoxine/pyridoxamine 5'-phosphate oxidase, found in Bradyrhizobium sp. (strain ORS 278).